Consider the following 131-residue polypeptide: UPF0134 protein MPN_010 (131 aa).

The protein belongs to the UPF0134 family.

In Mycoplasma pneumoniae (strain ATCC 29342 / M129 / Subtype 1) (Mycoplasmoides pneumoniae), this protein is UPF0134 protein MPN_010.